Here is a 646-residue protein sequence, read N- to C-terminus: Lipoteichoic acid synthase (646 aa).

The Cytoplasmic portion of the chain corresponds to 1–7 (MSSQKKK). Residues 8-28 (ISLFAFFLLTVITITLKTYFS) form a helical membrane-spanning segment. Over 29 to 43 (YYVDFSLGVKGLVQN) the chain is Extracellular. Residues 44–64 (LILLMNPYSLVALVLSVFLFF) form a helical membrane-spanning segment. The Cytoplasmic segment spans residues 65–68 (KGKK). The helical transmembrane segment at 69–89 (AFWFMFIGGFLLTFLLYANVV) threads the bilayer. At 90–119 (YFRFFSDFLTFSTLNQVGNVESMGGAVSAS) the chain is on the extracellular side. Residues 120–140 (FKWYDFVYFIDTLVYLFILIF) form a helical membrane-spanning segment. The Cytoplasmic portion of the chain corresponds to 141–153 (KTKWLDTKAFSKK). Residues 154-174 (FVPVVMAASVALFFLNLAFAE) form a helical membrane-spanning segment. Residues 175–646 (TDRPELLTRT…ETGPKANSKK (472 aa)) are Extracellular-facing. Mn(2+)-binding residues include Glu-255 and Thr-300. Residue Thr-300 is part of the active site. His-416 contacts substrate. 2 residues coordinate Mn(2+): Asp-475 and His-476. Over residues 623–638 (NPDFKKVNPSKYKYET) the composition is skewed to basic and acidic residues. The tract at residues 623–646 (NPDFKKVNPSKYKYETGPKANSKK) is disordered.

This sequence belongs to the LTA synthase family. In terms of processing, proteolytically cleaved.

It is found in the cell membrane. The protein resides in the secreted. The protein operates within cell wall biogenesis; lipoteichoic acid biosynthesis. Functionally, catalyzes the polymerization of lipoteichoic acid (LTA) polyglycerol phosphate, a reaction that presumably uses phosphatidylglycerol (PG) as substrate. Is required for staphylococcal growth and cell division process. The polypeptide is Lipoteichoic acid synthase (ltaS) (Staphylococcus aureus (strain bovine RF122 / ET3-1)).